The sequence spans 79 residues: MVKIRLARYGTKKRPFYKLVVADSRFSRNGRFIERLGYFNPIAKGKSEILKLNLERIEHWTNQGAQMSERTKKLIKQKR.

It belongs to the bacterial ribosomal protein bS16 family.

This Buchnera aphidicola subsp. Acyrthosiphon pisum (strain 5A) protein is Small ribosomal subunit protein bS16.